Here is a 286-residue protein sequence, read N- to C-terminus: Acetyl-coenzyme A carboxylase carboxyl transferase subunit beta (286 aa).

The CoA carboxyltransferase N-terminal domain maps to 26–286 (LWEKCVKCDA…LAKFTRRAAV (261 aa)). Residues Cys-30, Cys-33, Cys-49, and Cys-52 each contribute to the Zn(2+) site. The C4-type zinc-finger motif lies at 30-52 (CVKCDAVLYKPELEKNLDVCPKC).

Belongs to the AccD/PCCB family. As to quaternary structure, acetyl-CoA carboxylase is a heterohexamer composed of biotin carboxyl carrier protein (AccB), biotin carboxylase (AccC) and two subunits each of ACCase subunit alpha (AccA) and ACCase subunit beta (AccD). Requires Zn(2+) as cofactor.

It is found in the cytoplasm. The catalysed reaction is N(6)-carboxybiotinyl-L-lysyl-[protein] + acetyl-CoA = N(6)-biotinyl-L-lysyl-[protein] + malonyl-CoA. Its pathway is lipid metabolism; malonyl-CoA biosynthesis; malonyl-CoA from acetyl-CoA: step 1/1. Its function is as follows. Component of the acetyl coenzyme A carboxylase (ACC) complex. Biotin carboxylase (BC) catalyzes the carboxylation of biotin on its carrier protein (BCCP) and then the CO(2) group is transferred by the transcarboxylase to acetyl-CoA to form malonyl-CoA. The protein is Acetyl-coenzyme A carboxylase carboxyl transferase subunit beta of Cellvibrio japonicus (strain Ueda107) (Pseudomonas fluorescens subsp. cellulosa).